A 168-amino-acid chain; its full sequence is G/U mismatch-specific DNA glycosylase (168 aa).

Belongs to the uracil-DNA glycosylase (UDG) superfamily. TDG/mug family. In terms of assembly, binds DNA as a monomer.

It localises to the cytoplasm. It carries out the reaction Specifically hydrolyzes mismatched double-stranded DNA and polynucleotides, releasing free uracil.. Its function is as follows. Excises ethenocytosine and uracil, which can arise by alkylation or deamination of cytosine, respectively, from the corresponding mispairs with guanine in ds-DNA. It is capable of hydrolyzing the carbon-nitrogen bond between the sugar-phosphate backbone of the DNA and the mispaired base. The complementary strand guanine functions in substrate recognition. Required for DNA damage lesion repair in stationary-phase cells. In Salmonella agona (strain SL483), this protein is G/U mismatch-specific DNA glycosylase.